The following is a 1946-amino-acid chain: Integrin beta-like protein E (1946 aa).

An N-terminal signal peptide occupies residues 1-22 (MNNLFKFLFVLLAIFCPPISDL). The Extracellular portion of the chain corresponds to 23–1875 (VVSHGVPQQH…ATTQTTNNKT (1853 aa)). 3 N-linked (GlcNAc...) asparagine glycosylation sites follow: Asn-107, Asn-134, and Asn-203. An EGF-like domain is found at 423–460 (YGQNCDPTPPCDKGIPNEGILGDGKCMCINGYSGDKCD). 2 cysteine pairs are disulfide-bonded: Cys-433/Cys-448 and Cys-450/Cys-459. A VWFA domain is found at 514 to 699 (DVFVLVDVNV…AGLKSVLSNV (186 aa)). 18 N-linked (GlcNAc...) asparagine glycosylation sites follow: Asn-705, Asn-860, Asn-1043, Asn-1113, Asn-1177, Asn-1374, Asn-1401, Asn-1513, Asn-1611, Asn-1620, Asn-1662, Asn-1671, Asn-1737, Asn-1743, Asn-1762, Asn-1812, Asn-1852, and Asn-1873. Residues 1876–1896 (VLTGAIAGAAAGTALIAAAAW) traverse the membrane as a helical segment. At 1897-1946 (KLLRKAAPPTDTFFSEAAFLGDGVNANPLYEQSASAAENPLYQSASDNTD) the chain is on the cytoplasmic side.

The protein belongs to the SIB family. In terms of assembly, interacts with talA/talin.

The protein localises to the membrane. In terms of biological role, implicated in cellular adhesion. The sequence is that of Integrin beta-like protein E (sibE) from Dictyostelium discoideum (Social amoeba).